A 274-amino-acid chain; its full sequence is Orotidine 5'-phosphate decarboxylase (274 aa).

Catalysis depends on Lys95, which acts as the Proton donor.

Belongs to the OMP decarboxylase family. Type 2 subfamily.

It carries out the reaction orotidine 5'-phosphate + H(+) = UMP + CO2. It participates in pyrimidine metabolism; UMP biosynthesis via de novo pathway; UMP from orotate: step 2/2. The protein is Orotidine 5'-phosphate decarboxylase of Paracidovorax citrulli (strain AAC00-1) (Acidovorax citrulli).